The chain runs to 377 residues: Chaperone protein DnaJ (377 aa).

One can recognise a J domain in the interval 5–70 (DYYEILGVSK…EKRSAYDQYG (66 aa)). The segment at 131–209 (GVVREICVPT…CRGSGRIERT (79 aa)) adopts a CR-type zinc-finger fold. Zn(2+) is bound by residues cysteine 144, cysteine 147, cysteine 161, cysteine 164, cysteine 183, cysteine 186, cysteine 197, and cysteine 200. CXXCXGXG motif repeat units follow at residues 144–151 (CLQCRGSG), 161–168 (CVTCHGHG), 183–190 (CPSCNGHG), and 197–204 (CNKCRGSG).

The protein belongs to the DnaJ family. Homodimer. Zn(2+) is required as a cofactor.

It is found in the cytoplasm. Functionally, participates actively in the response to hyperosmotic and heat shock by preventing the aggregation of stress-denatured proteins and by disaggregating proteins, also in an autonomous, DnaK-independent fashion. Unfolded proteins bind initially to DnaJ; upon interaction with the DnaJ-bound protein, DnaK hydrolyzes its bound ATP, resulting in the formation of a stable complex. GrpE releases ADP from DnaK; ATP binding to DnaK triggers the release of the substrate protein, thus completing the reaction cycle. Several rounds of ATP-dependent interactions between DnaJ, DnaK and GrpE are required for fully efficient folding. Also involved, together with DnaK and GrpE, in the DNA replication of plasmids through activation of initiation proteins. In Blochmanniella floridana, this protein is Chaperone protein DnaJ.